The chain runs to 198 residues: Transcription factor FapR (198 aa).

In terms of domain architecture, MaoC-like spans 102 to 169 (NRIARGHHLF…RTIVEVNSYV (68 aa)).

Belongs to the FapR family.

In terms of biological role, transcriptional factor involved in regulation of membrane lipid biosynthesis by repressing genes involved in fatty acid and phospholipid metabolism. The protein is Transcription factor FapR of Geobacillus sp. (strain WCH70).